Reading from the N-terminus, the 257-residue chain is MALAKRIIPCLDVTAGRVVKGVNFVELRDAGDPVEIARRYDEQGADELTFLDITATSDQRDLILPIIEAVASQVFIPLTVGGGVRAVEDVRRLLNAGADKVSMNSSAVANPQLVRDAADKYGSQCIVVAIDAKRVSAPNEAPRWEVFTHGGRKATGLDAIEWARKMAELGAGEILLTSMDRDGTKSGFDLALTRAVSDAVPVPVIASGGVGCLQDLADGIKQGHADAVLAASIFHYGEHTVGEAKHFMADQGIAVRL.

Residues Asp-12 and Asp-131 contribute to the active site.

The protein belongs to the HisA/HisF family. Heterodimer of HisH and HisF.

The protein localises to the cytoplasm. It catalyses the reaction 5-[(5-phospho-1-deoxy-D-ribulos-1-ylimino)methylamino]-1-(5-phospho-beta-D-ribosyl)imidazole-4-carboxamide + L-glutamine = D-erythro-1-(imidazol-4-yl)glycerol 3-phosphate + 5-amino-1-(5-phospho-beta-D-ribosyl)imidazole-4-carboxamide + L-glutamate + H(+). It participates in amino-acid biosynthesis; L-histidine biosynthesis; L-histidine from 5-phospho-alpha-D-ribose 1-diphosphate: step 5/9. Functionally, IGPS catalyzes the conversion of PRFAR and glutamine to IGP, AICAR and glutamate. The HisF subunit catalyzes the cyclization activity that produces IGP and AICAR from PRFAR using the ammonia provided by the HisH subunit. The sequence is that of Imidazole glycerol phosphate synthase subunit HisF from Burkholderia vietnamiensis (strain G4 / LMG 22486) (Burkholderia cepacia (strain R1808)).